Consider the following 294-residue polypeptide: 33 kDa chaperonin (294 aa).

Intrachain disulfides connect Cys-239–Cys-241 and Cys-272–Cys-275.

It belongs to the HSP33 family. Under oxidizing conditions two disulfide bonds are formed involving the reactive cysteines. Under reducing conditions zinc is bound to the reactive cysteines and the protein is inactive.

It localises to the cytoplasm. In terms of biological role, redox regulated molecular chaperone. Protects both thermally unfolding and oxidatively damaged proteins from irreversible aggregation. Plays an important role in the bacterial defense system toward oxidative stress. The protein is 33 kDa chaperonin of Listeria welshimeri serovar 6b (strain ATCC 35897 / DSM 20650 / CCUG 15529 / CIP 8149 / NCTC 11857 / SLCC 5334 / V8).